A 186-amino-acid polypeptide reads, in one-letter code: Hydra actinoporin-like toxin 1 (186 aa).

Positions 1-18 (MLLYICLVNLLLPLSVGA) are cleaved as a signal peptide. The interval 29-48 (KVGVDAALQQIDDVWKGKTV) is N-terminal region. Residues 158-160 (RAG) carry the Cell attachment site, crucial for protein stability motif.

This sequence belongs to the actinoporin family. HALT subfamily. In terms of assembly, octamer or nonamer in membranes. Monomer in the soluble state. In vitro, interacts with folate receptor alpha (of target organism). In terms of tissue distribution, expressed female germline during oogenesis.

Its subcellular location is the nematocyst. The protein localises to the secreted. It is found in the target cell membrane. Functionally, pore-forming protein that forms hydrophilic pores and causes cytolysis. Compared to equinatoxin-2 (AC P61914), it reveals lower cytolysis activity (5-12-fold difference, tested on erythrocytes), a larger pore size (probably 2-3 nm) and different affinity to membrane lipids (100-fold lower affinity to sphingomyelin). Binds to sulfatides (SFT) as well as to the two sphingolipids, lysophosphatidic acid (LPA) and sphingosine-1-phosphate (S1P). It seems to bind more strongly to LPA than to S1P and SFT. Shows cytolytic activity on HeLa cells, with a different potency than its paralogs (from most potent to less potent: HALT-4&gt;HALT-6~HALT-1&gt;HALT-3&gt;HALT-7&gt;HALT-2). Pore formation is a multi-step process that involves specific recognition of membrane lipid by a protein aromatic residues rich region, firm binding to the membrane (mainly driven by hydrophobic interactions) accompanied by the transfer of the N-terminal region to the lipid-water interface and finally pore formation after oligomerization of monomers. In vitro, binds to the folate receptor alpha (FOLR1), a GPI-anchored membrane protein that plays a major role in the uptake of folate/folic acid into cells via endocytosis, suggesting a possible involvement of this receptor in the mechanism of HALT-1-induced cell lysis. In vivo, does not cause visible paralysis in larvae of the blowfly Sarcophaga faculata, the most common arthropod prey of Hydra. The polypeptide is Hydra actinoporin-like toxin 1 (Hydra vulgaris (Hydra)).